Reading from the N-terminus, the 127-residue chain is Aspartate 1-decarboxylase (127 aa).

The Schiff-base intermediate with substrate; via pyruvic acid role is filled by serine 25. Serine 25 carries the post-translational modification Pyruvic acid (Ser). Threonine 57 serves as a coordination point for substrate. Tyrosine 58 functions as the Proton donor in the catalytic mechanism. Position 73–75 (73–75 (GAA)) interacts with substrate.

It belongs to the PanD family. Heterooctamer of four alpha and four beta subunits. It depends on pyruvate as a cofactor. In terms of processing, is synthesized initially as an inactive proenzyme, which is activated by self-cleavage at a specific serine bond to produce a beta-subunit with a hydroxyl group at its C-terminus and an alpha-subunit with a pyruvoyl group at its N-terminus.

The protein localises to the cytoplasm. It catalyses the reaction L-aspartate + H(+) = beta-alanine + CO2. The protein operates within cofactor biosynthesis; (R)-pantothenate biosynthesis; beta-alanine from L-aspartate: step 1/1. Catalyzes the pyruvoyl-dependent decarboxylation of aspartate to produce beta-alanine. The protein is Aspartate 1-decarboxylase of Listeria monocytogenes serotype 4b (strain CLIP80459).